The following is a 227-amino-acid chain: GTP:AMP phosphotransferase AK3, mitochondrial (227 aa).

The GTP site is built by G17, G19, K20, G21, and T22. K20 carries the post-translational modification N6-succinyllysine. N6-acetyllysine is present on K34. S37 carries the post-translational modification Phosphoserine. Positions 37–66 are NMP; that stretch reads SSGDLLRDNMLRGTEIGVLAKAFIDQGKLI. Residues S38 and R43 each coordinate AMP. K57 is subject to N6-succinyllysine. K64 is a binding site for AMP. An N6-acetyllysine; alternate mark is found at K64 and K80. N6-succinyllysine; alternate is present on residues K64 and K80. Residues G91, R94, and Q98 each coordinate AMP. Residues 127 to 164 are LID; it reads ARWIHPASGRVYNIEFNPPKTVGIDDLTGEPLIQREDD. Residues R128, Y138, N139, R161, and R172 each contribute to the GTP site. N6-acetyllysine; alternate is present on residues K174 and K189. An N6-succinyllysine; alternate mark is found at K174 and K189. T201 serves as a coordination point for GTP. K203 is subject to N6-acetyllysine.

Belongs to the adenylate kinase family. AK3 subfamily. As to quaternary structure, monomer. In terms of tissue distribution, highly expressed in heart, skeletal muscle and liver, moderately expressed in pancreas and kidney, and weakly expressed in placenta, brain and lung.

It is found in the mitochondrion matrix. The enzyme catalyses a ribonucleoside 5'-triphosphate + AMP = a ribonucleoside 5'-diphosphate + ADP. The catalysed reaction is GTP + AMP = GDP + ADP. It carries out the reaction ITP + AMP = IDP + ADP. Inhibited by ATP. In terms of biological role, mitochondrial adenylate kinase with a specific GTP:AMP phosphotransferase activity. Could also use ITP as phosphate donor. Its physiological function is to recycle GTP into GDP which is necessary for the TCA cycle in the mitochondrial matrix. This chain is GTP:AMP phosphotransferase AK3, mitochondrial, found in Homo sapiens (Human).